The sequence spans 213 residues: ATP synthase subunit b 2 (213 aa).

A disordered region spans residues 1-45; that stretch reads MFVTEAYAQSAPTVGETHTETPAVGQPQPEATHTETGVAHGAEHG. Residues 57–76 traverse the membrane as a helical segment; that stretch reads TYASQVLWLAITFGLFYLLM.

Belongs to the ATPase B chain family. As to quaternary structure, F-type ATPases have 2 components, F(1) - the catalytic core - and F(0) - the membrane proton channel. F(1) has five subunits: alpha(3), beta(3), gamma(1), delta(1), epsilon(1). F(0) has three main subunits: a(1), b(2) and c(10-14). The alpha and beta chains form an alternating ring which encloses part of the gamma chain. F(1) is attached to F(0) by a central stalk formed by the gamma and epsilon chains, while a peripheral stalk is formed by the delta and b chains.

It is found in the cell inner membrane. Functionally, f(1)F(0) ATP synthase produces ATP from ADP in the presence of a proton or sodium gradient. F-type ATPases consist of two structural domains, F(1) containing the extramembraneous catalytic core and F(0) containing the membrane proton channel, linked together by a central stalk and a peripheral stalk. During catalysis, ATP synthesis in the catalytic domain of F(1) is coupled via a rotary mechanism of the central stalk subunits to proton translocation. Its function is as follows. Component of the F(0) channel, it forms part of the peripheral stalk, linking F(1) to F(0). The b'-subunit is a diverged and duplicated form of b found in plants and photosynthetic bacteria. This Agrobacterium fabrum (strain C58 / ATCC 33970) (Agrobacterium tumefaciens (strain C58)) protein is ATP synthase subunit b 2 (atpF2).